The following is a 217-amino-acid chain: Large ribosomal subunit protein uL4 (217 aa).

Residues 46-102 (KRQGTHSAKTRAEVSGGGRKPFRQKGTGRARQGSIRAPHFTGGGISHGPKPRDYSQR) form a disordered region.

It belongs to the universal ribosomal protein uL4 family. In terms of assembly, part of the 50S ribosomal subunit.

One of the primary rRNA binding proteins, this protein initially binds near the 5'-end of the 23S rRNA. It is important during the early stages of 50S assembly. It makes multiple contacts with different domains of the 23S rRNA in the assembled 50S subunit and ribosome. In terms of biological role, forms part of the polypeptide exit tunnel. In Corynebacterium diphtheriae (strain ATCC 700971 / NCTC 13129 / Biotype gravis), this protein is Large ribosomal subunit protein uL4.